Here is a 421-residue protein sequence, read N- to C-terminus: Exopolysaccharide production protein ExoF (421 aa).

An N-terminal signal peptide occupies residues 1 to 31 (MQSNRRSGKSAGSRMVSCFTRLALLAALAAS).

It localises to the periplasm. It participates in glycan metabolism; exopolysaccharide biosynthesis. Involved in succinoglycan (EPS I) synthesis. Needed for the addition of the first sugar (galactose) to the isoprenoid carrier. The chain is Exopolysaccharide production protein ExoF (exoF) from Rhizobium meliloti (strain 1021) (Ensifer meliloti).